The sequence spans 406 residues: Nicotinate phosphoribosyltransferase (406 aa).

A Phosphohistidine; by autocatalysis modification is found at histidine 225.

Belongs to the NAPRTase family. Post-translationally, transiently phosphorylated on a His residue during the reaction cycle. Phosphorylation strongly increases the affinity for substrates and increases the rate of nicotinate D-ribonucleotide production. Dephosphorylation regenerates the low-affinity form of the enzyme, leading to product release.

The catalysed reaction is nicotinate + 5-phospho-alpha-D-ribose 1-diphosphate + ATP + H2O = nicotinate beta-D-ribonucleotide + ADP + phosphate + diphosphate. It participates in cofactor biosynthesis; NAD(+) biosynthesis; nicotinate D-ribonucleotide from nicotinate: step 1/1. In terms of biological role, catalyzes the synthesis of beta-nicotinate D-ribonucleotide from nicotinate and 5-phospho-D-ribose 1-phosphate at the expense of ATP. The chain is Nicotinate phosphoribosyltransferase from Psychromonas ingrahamii (strain DSM 17664 / CCUG 51855 / 37).